Here is a 934-residue protein sequence, read N- to C-terminus: MTMGEIGDSVQLKEEGNKHFQAGEIDQAIDCYTKAIKTCKKEDKKALAVIYRNRSACFLKKENYSNAASDATKAIDVDAADIKALYRRCQAFEKLGKLDMAFKDVQRCATIEPKNKTFLETLRRLGAEIQQKLKTTFSTDSRVQNMFDILFSDEPDKEKREKAANNLIVLAREDAGAERIFQNNGVPLLMQLIDTGKPEMILAAIRTLSGMCTGHRARATAIIHSVGISKLCSIMAVDNEEIALATANLFQCVNDSLSGGDKRNYGKEEALVLDSSKDLKDILLALLEMIASKNVSGHGRDQALNLLTKNVPRQNKKSTDNSKCLFTIDHGLKKILKVCGQVPDLPDQLPMTENTQLIASVLLSKLYDDLRCDPERDQFRDICDDYIKSKFDPNDMDKNIHAINTLSGILQGPFDLGNVLAGRQGVMEMMVALCGSEREVDQLVAVEALIHASTKTSKASFFISNGVSLLKEMYKKTKNEKIKIRALVGLCKLGSAGGDDYSMRQFAEGSTEKLAKQCRKWLCNPTLDVRTRKWAIEGLAYLTNDADVKDDFAEDEPAMRAMFELTKSNDKTILYAVACTLVNCTNSYDKKEIIPEMVQLAKFSKQHVPEQHPKDKKDFIVRRVKRLLKAGVTSALAVMVKADNSILTDQTKEMLARVFLALTEDVKDRGIIVAQGGGKALIPLALEGTDKGKIKASHALAKIAAVSNPEIAFPGERIYEVVRPLVSLLGTDRDGMENFEALRGLTNLAGLNDKLRVKILKEKALPEIENYMFEDHEQIRQAATECMCNLVCCKEVQDRYLEDGNDKLKLLVLLCGEDEEKLQRAAAGALAMLTAAQKKLAVKMTKVTEQWLEILQRLCIHDNPEIQHRGLVTVFNMLDADDQLAKKLVESDMLEILTYVAKLEDNPKKQNAIDAARACLSKAMDNGLIKPFSN.

3 TPR repeats span residues 9-42, 48-81, and 83-115; these read SVQLKEEGNKHFQAGEIDQAIDCYTKAIKTCKKE, AVIYRNRSACFLKKENYSNAASDATKAIDVDAAD, and KALYRRCQAFEKLGKLDMAFKDVQRCATIEPKN. ARM repeat units lie at residues 174–213, 216–255, and 753–792; these read DAGAERIFQNNGVPLLMQLIDTGKPEMILAAIRTLSGMCT, RARATAIIHSVGISKLCSIMAVDNEEIALATANLFQCVND, and DKLRVKILKEKALPEIENYMFEDHEQIRQAATECMCNLVC.

In terms of assembly, interacts with apobec2a, apobec2b, hsp90a.1, hsp90a.2, hsp90ab1 and myosin. As to expression, expressed in striated muscle tissue including somites, heart and craniofacial muscle. Detected in mesoderm adjacent to the dorsal midline during the late gastrula stages and in somitic mesoderm during development of trunk skeletal muscle. Also expressed in cranial skeletal muscle and in cardiac and smooth muscle. Detected in somitic muscle and heart primordium of 24 hour embryos. At later stages, expressed in muscles of pectoral fins, jaw, branchial arches and eye.

The protein resides in the cytoplasm. Its subcellular location is the myofibril. It is found in the sarcomere. The protein localises to the z line. It localises to the a band. The protein resides in the perinuclear region. Functionally, acts as a co-chaperone for HSP90 and is required for proper folding of the myosin motor domain. Plays a role in sarcomere formation during muscle cell development. Required for myoseptal integrity, myofiber attachment, motility and craniofacial development. Is necessary for normal early lens development. This Danio rerio (Zebrafish) protein is Protein unc-45 homolog B.